A 178-amino-acid chain; its full sequence is ATP synthase subunit b (178 aa).

A helical transmembrane segment spans residues 30 to 50 (FFFVLAIFLIVLAVIGTFVVP).

This sequence belongs to the ATPase B chain family. In terms of assembly, F-type ATPases have 2 components, F(1) - the catalytic core - and F(0) - the membrane proton channel. F(1) has five subunits: alpha(3), beta(3), gamma(1), delta(1), epsilon(1). F(0) has three main subunits: a(1), b(2) and c(10-14). The alpha and beta chains form an alternating ring which encloses part of the gamma chain. F(1) is attached to F(0) by a central stalk formed by the gamma and epsilon chains, while a peripheral stalk is formed by the delta and b chains.

The protein localises to the cell membrane. F(1)F(0) ATP synthase produces ATP from ADP in the presence of a proton or sodium gradient. F-type ATPases consist of two structural domains, F(1) containing the extramembraneous catalytic core and F(0) containing the membrane proton channel, linked together by a central stalk and a peripheral stalk. During catalysis, ATP synthesis in the catalytic domain of F(1) is coupled via a rotary mechanism of the central stalk subunits to proton translocation. Functionally, component of the F(0) channel, it forms part of the peripheral stalk, linking F(1) to F(0). This Mycobacterium avium (strain 104) protein is ATP synthase subunit b.